The following is a 365-amino-acid chain: MAVPLPNDSSNAAFSWFTEYQRSCILENGVVPEWFHGIISRKAAEEMLMCKPAGYFLIRVSESRVGYTLSYRAEDRCRHFMINVLPDNQFMIVGEKTVYCSLHDLVAFHRRCPILPYNELLTVACEQGGKTNYVELLFPQKKDVSHRQVEWISSSTATNTLQSNISEENQTSQLQNNSTSHPGRLYPSLETEVSALNIQSTDQPTKPVPKPRTVFASKTPAEETPPQLPPRMRLPSRLQTSTEDRSQGLMPVIPDRQQITPNTPNEGRTQQKNQQQKPVVMSLVHIKKKLKKKRSEDHTYEEIAGGLFQKDATSALESINTNVEGLVENDYQELAEHPISDGIPKSSDRNLPVEYRHPPPFAPGY.

The SH2 domain maps to 34–125 (WFHGIISRKA…PYNELLTVAC (92 aa)). Disordered regions lie at residues 199 to 278 (QSTD…QQKP) and 335 to 365 (AEHPISDGIPKSSDRNLPVEYRHPPPFAPGY). The span at 257 to 277 (QQITPNTPNEGRTQQKNQQQK) shows a compositional bias: polar residues.

May be an adapter protein involved in tyrosine kinase signaling. The sequence is that of Hematopoietic SH2 domain-containing protein homolog (hsh2d) from Danio rerio (Zebrafish).